A 106-amino-acid chain; its full sequence is Large ribosomal subunit protein eL42 (106 aa).

It belongs to the eukaryotic ribosomal protein eL42 family.

The protein is Large ribosomal subunit protein eL42 (RPL44) of Kluyveromyces marxianus (Yeast).